The primary structure comprises 806 residues: Glycerol-3-phosphate acyltransferase (806 aa).

The short motif at 305 to 310 is the HXXXXD motif element; the sequence is CHRSHM.

This sequence belongs to the GPAT/DAPAT family.

It is found in the cell inner membrane. It carries out the reaction sn-glycerol 3-phosphate + an acyl-CoA = a 1-acyl-sn-glycero-3-phosphate + CoA. It participates in phospholipid metabolism; CDP-diacylglycerol biosynthesis; CDP-diacylglycerol from sn-glycerol 3-phosphate: step 1/3. This chain is Glycerol-3-phosphate acyltransferase, found in Salmonella arizonae (strain ATCC BAA-731 / CDC346-86 / RSK2980).